We begin with the raw amino-acid sequence, 126 residues long: uncharacterized protein (126 aa).

This is an uncharacterized protein from Salmonella typhi.